Here is a 75-residue protein sequence, read N- to C-terminus: Peptide Ctri10036 (75 aa).

A signal peptide spans 1–22 (MNSKYLFVFLILNVIFIDLCQG). Lysine amide is present on Lys41. Residues 47-75 (ELGSQYDYLQDFRKRELDLDDLLSKFPDY) constitute a propeptide that is removed on maturation.

Belongs to the non-disulfide-bridged peptide (NDBP) superfamily. Short antimicrobial peptide (group 4) family. As to expression, expressed by the venom gland.

It localises to the secreted. In Chaerilus tricostatus (Scorpion), this protein is Peptide Ctri10036.